The chain runs to 180 residues: uncharacterized protein (180 aa).

It belongs to the CdaR family.

This is an uncharacterized protein from Thermomonospora curvata.